The sequence spans 82 residues: Delta-conotoxin SVIE (82 aa).

The N-terminal stretch at 1–22 (MKLTCVMIVAVLFLTTWTFVTA) is a signal peptide. A propeptide spanning residues 23–51 (DDSRYGLKNLFPKARHEMKNPEASKLNKR) is cleaved from the precursor. 3 cysteine pairs are disulfide-bonded: C54-C69, C61-C73, and C68-C77. P65 carries the 4-hydroxyproline modification.

It belongs to the conotoxin O1 superfamily. In terms of tissue distribution, expressed by the venom duct.

The protein localises to the secreted. In terms of biological role, delta-conotoxins bind to site 6 of voltage-gated sodium channels (Nav) and inhibit the inactivation process. Impairs rapid channel inactivation of Nav1.4/SCN4A (Kd=500 nM). Interacts with a conserved hydrophobic triad (YFV) in the domain-4 voltage sensor of sodium channels. In vivo, injection of both native or synthetic peptide induces twitching of back limbs, running in circles, and spastic paralysis. The polypeptide is Delta-conotoxin SVIE (SO6) (Conus striatus (Striated cone)).